A 427-amino-acid polypeptide reads, in one-letter code: Trigger factor (427 aa).

Residues 163–248 (GDTVVIDFVG…IHEVKAKEVP (86 aa)) form the PPIase FKBP-type domain.

It belongs to the FKBP-type PPIase family. Tig subfamily.

It is found in the cytoplasm. The catalysed reaction is [protein]-peptidylproline (omega=180) = [protein]-peptidylproline (omega=0). Functionally, involved in protein export. Acts as a chaperone by maintaining the newly synthesized protein in an open conformation. Functions as a peptidyl-prolyl cis-trans isomerase. The protein is Trigger factor of Streptococcus pneumoniae (strain CGSP14).